A 230-amino-acid polypeptide reads, in one-letter code: Probable septum site-determining protein MinC (230 aa).

Belongs to the MinC family. Interacts with MinD and FtsZ.

Functionally, cell division inhibitor that blocks the formation of polar Z ring septums. Rapidly oscillates between the poles of the cell to destabilize FtsZ filaments that have formed before they mature into polar Z rings. Prevents FtsZ polymerization. In Rhodopseudomonas palustris (strain BisA53), this protein is Probable septum site-determining protein MinC.